A 242-amino-acid polypeptide reads, in one-letter code: tRNA pseudouridine synthase A (242 aa).

The Nucleophile role is filled by D51. Residue Y107 coordinates substrate.

The protein belongs to the tRNA pseudouridine synthase TruA family. In terms of assembly, homodimer.

It catalyses the reaction uridine(38/39/40) in tRNA = pseudouridine(38/39/40) in tRNA. Functionally, formation of pseudouridine at positions 38, 39 and 40 in the anticodon stem and loop of transfer RNAs. This Helicobacter pylori (strain ATCC 700392 / 26695) (Campylobacter pylori) protein is tRNA pseudouridine synthase A.